An 83-amino-acid polypeptide reads, in one-letter code: Exodeoxyribonuclease 7 small subunit (83 aa).

This sequence belongs to the XseB family. As to quaternary structure, heterooligomer composed of large and small subunits.

Its subcellular location is the cytoplasm. It catalyses the reaction Exonucleolytic cleavage in either 5'- to 3'- or 3'- to 5'-direction to yield nucleoside 5'-phosphates.. Functionally, bidirectionally degrades single-stranded DNA into large acid-insoluble oligonucleotides, which are then degraded further into small acid-soluble oligonucleotides. In Rhodopseudomonas palustris (strain BisB5), this protein is Exodeoxyribonuclease 7 small subunit.